The following is a 374-amino-acid chain: DNA replication and repair protein RecF (374 aa).

Residue 30–37 (GNNAQGKS) coordinates ATP.

This sequence belongs to the RecF family.

It localises to the cytoplasm. Functionally, the RecF protein is involved in DNA metabolism; it is required for DNA replication and normal SOS inducibility. RecF binds preferentially to single-stranded, linear DNA. It also seems to bind ATP. The protein is DNA replication and repair protein RecF of Nostoc punctiforme (strain ATCC 29133 / PCC 73102).